We begin with the raw amino-acid sequence, 215 residues long: LexA repressor (215 aa).

A DNA-binding region (H-T-H motif) is located at residues 28–48; sequence RAEIAAELGFSSPNAAEEHLR. Catalysis depends on for autocatalytic cleavage activity residues S133 and K170.

This sequence belongs to the peptidase S24 family. In terms of assembly, homodimer.

It carries out the reaction Hydrolysis of Ala-|-Gly bond in repressor LexA.. Represses a number of genes involved in the response to DNA damage (SOS response), including recA and lexA. In the presence of single-stranded DNA, RecA interacts with LexA causing an autocatalytic cleavage which disrupts the DNA-binding part of LexA, leading to derepression of the SOS regulon and eventually DNA repair. The sequence is that of LexA repressor from Burkholderia mallei (strain NCTC 10247).